We begin with the raw amino-acid sequence, 576 residues long: Arginine--tRNA ligase (576 aa).

A 'HIGH' region motif is present at residues 122-132; the sequence is PNVAKEMHVGH.

It belongs to the class-I aminoacyl-tRNA synthetase family. As to quaternary structure, monomer.

It is found in the cytoplasm. The catalysed reaction is tRNA(Arg) + L-arginine + ATP = L-arginyl-tRNA(Arg) + AMP + diphosphate. The chain is Arginine--tRNA ligase from Pectobacterium atrosepticum (strain SCRI 1043 / ATCC BAA-672) (Erwinia carotovora subsp. atroseptica).